Here is a 507-residue protein sequence, read N- to C-terminus: Xaa-Pro aminopeptidase 3 (507 aa).

A mitochondrion-targeting transit peptide spans 1-31 (MPWLLSAPKLVPAVANVRGLSGCMLCSQRRY). Positions 54–79 (HPHLLRPGEVTPGLSQVEYALRRHKL) are interaction with TNFRSF1B. Y300, D331, D342, H424, H431, E451, and E475 together coordinate substrate. Residues D331, D342, and H424 each contribute to the Mn(2+) site. Mn(2+) contacts are provided by E451 and E475.

The protein belongs to the peptidase M24B family. In terms of assembly, homodimer. Isoform 1 interacts with TNFRSF1B/TNFR2 (activated) and TRAF2. It depends on Mn(2+) as a cofactor. In terms of tissue distribution, isoform 1 and isoform 2 are widely expressed, with isoform 1 being more abundant.

The protein localises to the mitochondrion. Its subcellular location is the cytoplasm. It carries out the reaction Release of any N-terminal amino acid, including proline, that is linked to proline, even from a dipeptide or tripeptide.. In terms of biological role, catalyzes the removal of a penultimate prolyl residue from the N-termini of peptides, such as Leu-Pro-Ala. Also shows low activity towards peptides with Ala or Ser at the P1 position. Promotes TNFRSF1B-mediated phosphorylation of MAPK8/JNK1 and MAPK9/JNK2, suggesting a function as an adapter protein for TNFRSF1B; the effect is independent of XPNPEP3 peptidase activity. May inhibit apoptotic cell death induced via TNF-TNFRSF1B signaling. The polypeptide is Xaa-Pro aminopeptidase 3 (XPNPEP3) (Homo sapiens (Human)).